A 121-amino-acid chain; its full sequence is UPF0231 protein ESA_03214 (121 aa).

The protein belongs to the UPF0231 family.

In Cronobacter sakazakii (strain ATCC BAA-894) (Enterobacter sakazakii), this protein is UPF0231 protein ESA_03214.